The sequence spans 285 residues: Probable endonuclease 4 (285 aa).

9 residues coordinate Zn(2+): His-69, His-109, Glu-145, Asp-179, His-182, His-216, Asp-229, His-231, and Glu-261.

It belongs to the AP endonuclease 2 family. Zn(2+) is required as a cofactor.

It catalyses the reaction Endonucleolytic cleavage to 5'-phosphooligonucleotide end-products.. In terms of biological role, endonuclease IV plays a role in DNA repair. It cleaves phosphodiester bonds at apurinic or apyrimidinic (AP) sites, generating a 3'-hydroxyl group and a 5'-terminal sugar phosphate. This chain is Probable endonuclease 4, found in Escherichia coli O1:K1 / APEC.